The primary structure comprises 459 residues: MKDIKTYSNKNILVLGLGKSGFAVSELLLKLGAKLTLNDKADLDKNEKAQELKAKGVRVIGGHHPVDLLEKEHFDYLVKNPGIPYENPMVKKAEELNIPIITEPEIALSCSDAPYVCVTGSNGKTTTVMLTQRILDHHLQKSGHHAYAVGNIGVPISEVVPKATKDDILVVEISSFQLLGVTDIDPKVAAIVDIYNNVHLDYHKTFENYVNAKLNVTRTQNSDDYFIANYDQKDILAKEKEVTPAKMQTFSETDSSADYFIGDEYLESQNEKIMKIVDIKLPGIHNLQNSLVAIAISKVMGADNDDIAAVLSTFTGAKHRLQYVTTLDGRKVYNDSKSTNIEAATVAIPSFKEPEVLIAGGLDRGFLFDDLVPLFKKHVKSIVLYGETKYLLADAARKAGIKDIVIVNTLQEAVPRAYELSEPGDVILFSPACASWDQFRTFEDRGDYFVKFVKELKTK.

Residue 120–126 (GSNGKTT) coordinates ATP.

Belongs to the MurCDEF family.

Its subcellular location is the cytoplasm. It carries out the reaction UDP-N-acetyl-alpha-D-muramoyl-L-alanine + D-glutamate + ATP = UDP-N-acetyl-alpha-D-muramoyl-L-alanyl-D-glutamate + ADP + phosphate + H(+). It functions in the pathway cell wall biogenesis; peptidoglycan biosynthesis. Functionally, cell wall formation. Catalyzes the addition of glutamate to the nucleotide precursor UDP-N-acetylmuramoyl-L-alanine (UMA). This Lactobacillus helveticus (strain DPC 4571) protein is UDP-N-acetylmuramoylalanine--D-glutamate ligase.